The sequence spans 135 residues: MACGLVASNLNLKPGECLRVRGEVAPDAKSFLLNLGKDDNNLCLHFNPRFNAHGDINTIVCNSKDGGAWGAEQREVAFPFQPGSVVEVCISFNQADLTVKLPDGHEFKFPNRLNLEAINYMSAGGDFKIKCVAFD.

Position 2 is an N-acetylalanine (A2). One can recognise a Galectin domain in the interval 4–135 (GLVASNLNLK…DFKIKCVAFD (132 aa)). 2 positions are modified to N6-acetyllysine: K13 and K29. At S30 the chain carries Phosphoserine. A beta-D-galactoside-binding positions include 45-49 (HFNPR), H53, N62, and 69-72 (WGAE). N6-acetyllysine; alternate is present on K108. Residue K108 is modified to N6-succinyllysine; alternate. An N6-acetyllysine modification is found at K128.

In terms of assembly, homodimer. Binds LGALS3BP. Interacts with CD2, CD3, CD4, CD6, CD7, CD43, ALCAM and CD45. Interacts with laminin (via poly-N-acetyllactosamine). Interacts with SUSD2. Interacts with cargo receptor TMED10; the interaction mediates the translocation from the cytoplasm into the ERGIC (endoplasmic reticulum-Golgi intermediate compartment) and thereby secretion. In terms of processing, the N-terminus is blocked.

It is found in the secreted. The protein resides in the extracellular space. The protein localises to the extracellular matrix. Its subcellular location is the cytoplasm. Functionally, lectin that binds beta-galactoside and a wide array of complex carbohydrates. Plays a role in regulating apoptosis, cell proliferation and cell differentiation. Inhibits CD45 protein phosphatase activity and therefore the dephosphorylation of Lyn kinase. Strong inducer of T-cell apoptosis. This Bubalus bubalis (Domestic water buffalo) protein is Galectin-1.